The chain runs to 475 residues: Ribulose bisphosphate carboxylase large chain (475 aa).

Residues 1-2 (MS) constitute a propeptide that is removed on maturation. P3 is subject to N-acetylproline. Position 14 is an N6,N6,N6-trimethyllysine (K14). Residues N123 and T173 each contribute to the substrate site. K175 functions as the Proton acceptor in the catalytic mechanism. K177 provides a ligand contact to substrate. Residues K201, D203, and E204 each coordinate Mg(2+). K201 bears the N6-carboxylysine mark. H294 acts as the Proton acceptor in catalysis. R295, H327, and S379 together coordinate substrate.

Belongs to the RuBisCO large chain family. Type I subfamily. Heterohexadecamer of 8 large chains and 8 small chains; disulfide-linked. The disulfide link is formed within the large subunit homodimers. It depends on Mg(2+) as a cofactor. In terms of processing, the disulfide bond which can form in the large chain dimeric partners within the hexadecamer appears to be associated with oxidative stress and protein turnover.

Its subcellular location is the plastid. The protein resides in the chloroplast. It catalyses the reaction 2 (2R)-3-phosphoglycerate + 2 H(+) = D-ribulose 1,5-bisphosphate + CO2 + H2O. The catalysed reaction is D-ribulose 1,5-bisphosphate + O2 = 2-phosphoglycolate + (2R)-3-phosphoglycerate + 2 H(+). In terms of biological role, ruBisCO catalyzes two reactions: the carboxylation of D-ribulose 1,5-bisphosphate, the primary event in carbon dioxide fixation, as well as the oxidative fragmentation of the pentose substrate in the photorespiration process. Both reactions occur simultaneously and in competition at the same active site. The chain is Ribulose bisphosphate carboxylase large chain (rbcL) from Cucumis sativus (Cucumber).